A 212-amino-acid chain; its full sequence is Large ribosomal subunit protein uL3 (212 aa).

The residue at position 153 (Q153) is an N5-methylglutamine.

The protein belongs to the universal ribosomal protein uL3 family. In terms of assembly, part of the 50S ribosomal subunit. Forms a cluster with proteins L14 and L19. In terms of processing, methylated by PrmB.

In terms of biological role, one of the primary rRNA binding proteins, it binds directly near the 3'-end of the 23S rRNA, where it nucleates assembly of the 50S subunit. This is Large ribosomal subunit protein uL3 from Azoarcus sp. (strain BH72).